The chain runs to 432 residues: Adenylosuccinate synthetase (432 aa).

Residues 13 to 19 (GDEGKGK) and 41 to 43 (GHT) contribute to the GTP site. Residue D14 is the Proton acceptor of the active site. Mg(2+)-binding residues include D14 and G41. Residues 14 to 17 (DEGK), 39 to 42 (NAGH), T130, R144, Q225, T240, and R304 each bind IMP. H42 serves as the catalytic Proton donor. Residue 300–306 (AVTGRPR) participates in substrate binding. GTP-binding positions include R306, 332–334 (KLD), and 415–417 (STG).

It belongs to the adenylosuccinate synthetase family. Homodimer. It depends on Mg(2+) as a cofactor.

Its subcellular location is the cytoplasm. It carries out the reaction IMP + L-aspartate + GTP = N(6)-(1,2-dicarboxyethyl)-AMP + GDP + phosphate + 2 H(+). It participates in purine metabolism; AMP biosynthesis via de novo pathway; AMP from IMP: step 1/2. In terms of biological role, plays an important role in the de novo pathway of purine nucleotide biosynthesis. Catalyzes the first committed step in the biosynthesis of AMP from IMP. This Actinobacillus pleuropneumoniae serotype 7 (strain AP76) protein is Adenylosuccinate synthetase.